Consider the following 457-residue polypeptide: Squalene epoxidase erg1 (457 aa).

FAD contacts are provided by residues 15–16, 35–36, Arg43, Arg114, Val130, Asp293, and Met306; these read IT and ER. The next 3 membrane-spanning stretches (helical) occupy residues 347 to 364, 409 to 429, and 433 to 453; these read GYSF…KLFT, FYAV…ALLM, and IIES…YILS.

The protein belongs to the squalene monooxygenase family. FAD serves as cofactor.

The protein localises to the microsome membrane. It localises to the endoplasmic reticulum membrane. The protein resides in the vacuole membrane. The enzyme catalyses squalene + reduced [NADPH--hemoprotein reductase] + O2 = (S)-2,3-epoxysqualene + oxidized [NADPH--hemoprotein reductase] + H2O + H(+). Its pathway is terpene metabolism; lanosterol biosynthesis; lanosterol from farnesyl diphosphate: step 2/3. It participates in steroid metabolism; ergosterol biosynthesis. Activity is blocked by the allylamine class antifungal terbinafine. In terms of biological role, squalene epoxidase; part of the third module of ergosterol biosynthesis pathway that includes by the late steps of the pathway. Erg1 catalyzes the epoxidation of squalene into 2,3-epoxysqualene. The third module or late pathway involves the ergosterol synthesis itself through consecutive reactions that mainly occur in the endoplasmic reticulum (ER) membrane. Firstly, the squalene synthase erg9 catalyzes the condensation of 2 farnesyl pyrophosphate moieties to form squalene, which is the precursor of all steroids. Secondly, squalene is converted into lanosterol by the consecutive action of the squalene epoxidase erg1 and the lanosterol synthase erg7. The lanosterol 14-alpha-demethylase erg11/cyp1 catalyzes C14-demethylation of lanosterol to produce 4,4'-dimethyl cholesta-8,14,24-triene-3-beta-ol. In the next steps, a complex process involving various demethylation, reduction and desaturation reactions catalyzed by the C-14 reductase erg24 and the C-4 demethylation complex erg25-erg26-erg27 leads to the production of zymosterol. Erg28 likely functions in the C-4 demethylation complex reaction by tethering erg26 and Erg27 to the endoplasmic reticulum or to facilitate interaction between these proteins. Then, the sterol 24-C-methyltransferase erg6 catalyzes the methyl transfer from S-adenosyl-methionine to the C-24 of zymosterol to form fecosterol. The C-8 sterol isomerase erg2 catalyzes the reaction which results in unsaturation at C-7 in the B ring of sterols and thus converts fecosterol to episterol. The sterol-C5-desaturases erg31 and erg32 then catalyze the introduction of a C-5 double bond in the B ring to produce 5-dehydroepisterol. The C-22 sterol desaturase erg5 further converts 5-dehydroepisterol into ergosta-5,7,22,24(28)-tetraen-3beta-ol by forming the C-22(23) double bond in the sterol side chain. Finally, ergosta-5,7,22,24(28)-tetraen-3beta-ol is substrate of the C-24(28) sterol reductase erg4 to produce ergosterol. In the genus Schizosaccharomyces, a second route exists between lanosterol and fecosterol, via the methylation of lanosterol to eburicol by erg6, followed by C14-demethylation by erg11/cyp1 and C4-demethylation by the demethylation complex erg25-erg26-erg27. This Schizosaccharomyces pombe (strain 972 / ATCC 24843) (Fission yeast) protein is Squalene epoxidase erg1.